The chain runs to 312 residues: Serine protease 48 (312 aa).

The N-terminal stretch at 1 to 22 (MGPAGLKVLLLLFLGAFQGSFT) is a signal peptide. One can recognise a Peptidase S1 domain in the interval 40-276 (IVGGQDAALG…YQKWISAIIS (237 aa)). A disulfide bridge connects residues cysteine 65 and cysteine 81. Active-site charge relay system residues include histidine 80 and aspartate 126. Asparagine 149 carries an N-linked (GlcNAc...) asparagine glycan. 3 cysteine pairs are disulfide-bonded: cysteine 160–cysteine 235, cysteine 190–cysteine 214, and cysteine 225–cysteine 253. The active-site Charge relay system is the serine 229. N-linked (GlcNAc...) asparagine glycosylation occurs at asparagine 263.

Belongs to the peptidase S1 family.

It localises to the secreted. The polypeptide is Serine protease 48 (Prss48) (Mus musculus (Mouse)).